Here is a 1495-residue protein sequence, read N- to C-terminus: Collagen alpha-1(XVII) chain (1495 aa).

Over residues 1–17 (MDSVTKKTRQDGSEVTE) the composition is skewed to basic and acidic residues. Residues 1–138 (MDSVTKKTRQ…VRLQSASPSG (138 aa)) are disordered. The Cytoplasmic segment spans residues 1–435 (MDSVTKKTRQ…CGSCCSWWKW (435 aa)). The interval 1-535 (MDSVTKKTRQ…IERGYFRGER (535 aa)) is nonhelical region (NC16). Residues 19–32 (QGGSSSGLKTSSHT) are compositionally biased toward polar residues. A compositionally biased stretch (low complexity) spans 51–63 (SSGSGRLNSSSSG). 2 stretches are compositionally biased toward polar residues: residues 64–80 (YRQT…SPGS) and 95–104 (EGSSSANSSP). A helical; Signal-anchor for type II membrane protein membrane pass occupies residues 436 to 456 (LLGLLLAWLLLLGLLFGLIAL). The Extracellular portion of the chain corresponds to 457 to 1495 (AEEVRKLKSR…GRRRRRSVGV (1039 aa)). 7 disordered regions span residues 532–824 (RGER…EKGS), 847–999 (DLQG…SSSQ), 1160–1185 (EFSG…SSGI), 1201–1226 (SISG…TGLL), 1251–1278 (RSYI…LVAG), 1295–1336 (GGSI…GSYG), and 1396–1416 (MSYT…PGIS). The triple-helical region stretch occupies residues 536–1482 (GEPGMKGDMG…KGEKGEKGEQ (947 aa)). Composition is skewed to low complexity over residues 702-711 (PGAKGPAGQA) and 761-773 (RPGA…APGK). Pro residues predominate over residues 786–807 (PGPPGPPGPIGPTGPPGVPGPV). Residues 809-818 (PAGLPGQQGP) are compositionally biased toward low complexity. Composition is skewed to pro residues over residues 871–886 (PRGP…PPGR), 901–910 (PPGPPGPPGP), 946–955 (PPGPPGPPGP), 981–993 (PPGP…PPGP), 1167–1179 (PPGP…PPGI), 1208–1218 (PPGPPGPPGPP), and 1257–1269 (PPGP…PPGP). The segment covering 1296–1308 (GSIGAEGSHGGSL) has biased composition (gly residues). Over residues 1309–1336 (GASSSYGSSMSSSMSSYSASMGSDGSYG) the composition is skewed to low complexity. Over residues 1403–1413 (PPGPPGPPGPP) the composition is skewed to pro residues. Asn-1424 carries an N-linked (GlcNAc...) asparagine glycan. A disordered region spans residues 1435–1495 (THGTVRGPPG…GRRRRRSVGV (61 aa)). Residues 1472–1481 (PKGEKGEKGE) are compositionally biased toward basic and acidic residues. The segment at 1483-1495 (MYSGRRRRRSVGV) is nonhelical region (NC1). Over residues 1486-1495 (GRRRRRSVGV) the composition is skewed to basic residues.

As to quaternary structure, homotrimers of alpha 1(XVII)chains. Post-translationally, the intracellular/endo domain is disulfide-linked. In terms of processing, prolines at the third position of the tripeptide repeating unit (G-X-Y) are hydroxylated in some or all of the chains. The ectodomain is shedded from the surface of keratinocytes resulting in a 120-kDa soluble form, also named as 120 kDa linear IgA disease antigen homolog. The shedding is mediated by membrane-bound metalloproteases. As to expression, cornea specific.

The protein localises to the cell junction. It is found in the hemidesmosome. The protein resides in the membrane. Its subcellular location is the secreted. It localises to the extracellular space. The protein localises to the extracellular matrix. It is found in the basement membrane. In terms of biological role, may play a role in the integrity of hemidesmosome and the attachment of basal keratinocytes to the underlying basement membrane. Functionally, the 120 kDa linear IgA disease antigen homolog is an anchoring filament component involved in dermal-epidermal cohesion. This Gallus gallus (Chicken) protein is Collagen alpha-1(XVII) chain (COL17A1).